Here is a 124-residue protein sequence, read N- to C-terminus: Putative B3 domain-containing protein At1g51970 (124 aa).

Residues Val18 to Asn124 constitute a DNA-binding region (TF-B3).

The protein resides in the nucleus. The protein is Putative B3 domain-containing protein At1g51970 of Arabidopsis thaliana (Mouse-ear cress).